The sequence spans 141 residues: uncharacterized protein (141 aa).

One can recognise a MaoC-like domain in the interval 8–112 (IGQVFKTKSL…VLDKQPKRNE (105 aa)).

This is an uncharacterized protein from Bacillus subtilis (strain 168).